The following is a 446-amino-acid chain: Eukaryotic translation initiation factor 2 subunit gamma (446 aa).

One can recognise a tr-type G domain in the interval 21-227 (QATINIGTIG…YIVKKIPIPV (207 aa)). A G1 region spans residues 30–37 (GHVAHGKS). A GTP-binding site is contributed by 33-38 (AHGKST). A G2 region spans residues 58 to 62 (NITIK). The G3 stretch occupies residues 114–117 (DCPG). Residues 170 to 173 (NKVD) and 205 to 207 (SAQ) each bind GTP. The segment at 170-173 (NKVD) is G4. A G5 region spans residues 205–207 (SAQ). Residues 436 to 446 (AKVVEGKTLKV) are interacts with cdc123.

Belongs to the TRAFAC class translation factor GTPase superfamily. Classic translation factor GTPase family. EIF2G subfamily. As to quaternary structure, eukaryotic translation initiation factor 2 eIF2 is a heterotrimeric complex composed of an alpha, a beta and a gamma subunit. The factors eIF-1, eIF-2, eIF-3, TIF5/eIF-5 and methionyl-tRNAi form a multifactor complex (MFC) that may bind to the 40S ribosome. Interacts with cdc123; the interaction is direct.

Its subcellular location is the cytoplasm. It is found in the cytosol. It catalyses the reaction GTP + H2O = GDP + phosphate + H(+). In terms of biological role, as a subunit of eukaryotic initiation factor 2 eIF2, involved in the early steps of protein synthesis. In the presence of GTP, eIF-2 forms a ternary complex with initiator tRNA Met-tRNAi and then recruits the 40S ribosomal complex and initiation factors eIF-1, eIF-1A and eIF-3 to form the 43S pre-initiation complex (43S PIC), a step that determines the rate of protein translation. The 43S PIC binds to mRNA and scans downstream to the initiation codon, where it forms a 48S initiation complex by codon-anticodon base pairing. This leads to the displacement of eIF-1 to allow GTPase-activating protein (GAP) eIF-5-mediated hydrolysis of eIF2-bound GTP. Hydrolysis of GTP and release of Pi, which makes GTP hydrolysis irreversible, causes the release of the eIF-2-GDP binary complex from the 40S subunit, an event that is essential for the subsequent joining of the 60S ribosomal subunit to form an elongation-competent 80S ribosome. In order for eIF-2 to recycle and catalyze another round of initiation, the GDP bound to eIF-2 must be exchanged with GTP by way of a reaction catalyzed by GDP-GTP exchange factor (GEF) eIF-2B. In Schizosaccharomyces pombe (strain 972 / ATCC 24843) (Fission yeast), this protein is Eukaryotic translation initiation factor 2 subunit gamma (tif213).